A 375-amino-acid polypeptide reads, in one-letter code: Alcohol dehydrogenase B (375 aa).

Zn(2+)-binding residues include C40, H62, C92, C95, C98, C106, and C169.

This sequence belongs to the zinc-containing alcohol dehydrogenase family. Requires Zn(2+) as cofactor.

It is found in the cytoplasm. It carries out the reaction a primary alcohol + NAD(+) = an aldehyde + NADH + H(+). The enzyme catalyses a secondary alcohol + NAD(+) = a ketone + NADH + H(+). This is Alcohol dehydrogenase B (adhB) from Mycobacterium bovis (strain ATCC BAA-935 / AF2122/97).